The primary structure comprises 149 residues: Ribosome-binding factor A (149 aa).

The interval 123-149 is disordered; sequence LAKLREGAAPAGDADPYKTSSKSESEE.

It belongs to the RbfA family. Monomer. Binds 30S ribosomal subunits, but not 50S ribosomal subunits or 70S ribosomes.

It localises to the cytoplasm. One of several proteins that assist in the late maturation steps of the functional core of the 30S ribosomal subunit. Associates with free 30S ribosomal subunits (but not with 30S subunits that are part of 70S ribosomes or polysomes). Required for efficient processing of 16S rRNA. May interact with the 5'-terminal helix region of 16S rRNA. The chain is Ribosome-binding factor A from Corynebacterium glutamicum (strain ATCC 13032 / DSM 20300 / JCM 1318 / BCRC 11384 / CCUG 27702 / LMG 3730 / NBRC 12168 / NCIMB 10025 / NRRL B-2784 / 534).